The primary structure comprises 1068 residues: Retinoblastoma-like protein 1 (1068 aa).

The residue at position 332 (Thr332) is a Phosphothreonine; by CDK2. Position 369 is a phosphothreonine; by CDK4 (Thr369). Residue Thr385 is modified to Phosphothreonine; by CDK2. The tract at residues Thr385–Lys584 is domain A. Positions Thr385–Tyr949 are pocket; binds T and E1A. A spacer region spans residues Val585–Asn780. Phosphoserine; by CDK2 and CDK4 is present on Ser640. 2 positions are modified to phosphoserine: Ser650 and Ser749. A Phosphoserine; by CDK2 modification is found at Ser762. Residues Arg781–Tyr949 are domain B. Phosphoserine; by CDK2 and CDK4 occurs at positions 964 and 975. Ser988 is subject to Phosphoserine; by CDK2. A Phosphothreonine; by CDK2 modification is found at Thr997. Residue Ser1009 is modified to Phosphoserine; by CDK2. At Ser1041 the chain carries Phosphoserine.

Belongs to the retinoblastoma protein (RB) family. In terms of assembly, component of the DREAM complex (also named LINC complex) at least composed of E2F4, E2F5, LIN9, LIN37, LIN52, LIN54, MYBL1, MYBL2, RBL1, RBL2, RBBP4, TFDP1 and TFDP2. The complex exists in quiescent cells where it represses cell cycle-dependent genes. It dissociates in S phase when LIN9, LIN37, LIN52 and LIN54 form a subcomplex that binds to MYBL2. Interacts with AATF. Interacts with KDM5A. Interacts with KMT5B and KMT5C. Interacts with USP4. Interacts with RBBP9. As to quaternary structure, (Microbial infection) Interacts with SV40 and JC virus large T antigens. Large T antigen, but not E1A, binds only to the unphosphorylated form. (Microbial infection) Interacts with JC virus small t antigen. Cell-cycle arrest properties are inactivated by phosphorylation on Thr-332, Ser-640, Ser-964 and Ser-975 by CDK4.

It is found in the nucleus. Its function is as follows. Key regulator of entry into cell division. Directly involved in heterochromatin formation by maintaining overall chromatin structure and, in particular, that of constitutive heterochromatin by stabilizing histone methylation. Recruits and targets histone methyltransferases KMT5B and KMT5C, leading to epigenetic transcriptional repression. Controls histone H4 'Lys-20' trimethylation. Probably acts as a transcription repressor by recruiting chromatin-modifying enzymes to promoters. Potent inhibitor of E2F-mediated trans-activation. May act as a tumor suppressor. The polypeptide is Retinoblastoma-like protein 1 (RBL1) (Homo sapiens (Human)).